The chain runs to 456 residues: tRNA-2-methylthio-N(6)-dimethylallyladenosine synthase (456 aa).

Residues 6 to 125 (KRLFIKTYGC…LPELIAQAHR (120 aa)) form the MTTase N-terminal domain. The [4Fe-4S] cluster site is built by Cys15, Cys51, Cys88, Cys163, Cys167, and Cys170. One can recognise a Radical SAM core domain in the interval 149–385 (QVEGYSAFVT…QELLSDQQAA (237 aa)). Residues 388 to 450 (ESMIGRTLPV…RNSLSGSLTG (63 aa)) form the TRAM domain.

Belongs to the methylthiotransferase family. MiaB subfamily. As to quaternary structure, monomer. It depends on [4Fe-4S] cluster as a cofactor.

It is found in the cytoplasm. The enzyme catalyses N(6)-dimethylallyladenosine(37) in tRNA + (sulfur carrier)-SH + AH2 + 2 S-adenosyl-L-methionine = 2-methylsulfanyl-N(6)-dimethylallyladenosine(37) in tRNA + (sulfur carrier)-H + 5'-deoxyadenosine + L-methionine + A + S-adenosyl-L-homocysteine + 2 H(+). Catalyzes the methylthiolation of N6-(dimethylallyl)adenosine (i(6)A), leading to the formation of 2-methylthio-N6-(dimethylallyl)adenosine (ms(2)i(6)A) at position 37 in tRNAs that read codons beginning with uridine. The chain is tRNA-2-methylthio-N(6)-dimethylallyladenosine synthase from Maricaulis maris (strain MCS10) (Caulobacter maris).